A 223-amino-acid polypeptide reads, in one-letter code: Ubiquitin carboxyl-terminal hydrolase isozyme L1 (223 aa).

M1 carries the N-acetylmethionine modification. Residues 2–221 (QLKPMEINPE…VRFSAVALCK (220 aa)) form the UCH catalytic domain. An interaction with ubiquitin region spans residues 5 to 10 (PMEINP). The active-site Nucleophile is the C90. S125 carries the post-translational modification Phosphoserine. H161 acts as the Proton donor in catalysis. The interval 211-216 (EVRFSA) is interaction with ubiquitin. Residue C220 is the site of S-farnesyl cysteine attachment. The propeptide at 221 to 223 (KCA) is removed in mature form.

The protein belongs to the peptidase C12 family. As to quaternary structure, monomer. Homodimer. Interacts with COPS5 and SNCA. Post-translationally, O-glycosylated.

The protein resides in the cytoplasm. It is found in the endoplasmic reticulum membrane. It catalyses the reaction Thiol-dependent hydrolysis of ester, thioester, amide, peptide and isopeptide bonds formed by the C-terminal Gly of ubiquitin (a 76-residue protein attached to proteins as an intracellular targeting signal).. In terms of biological role, ubiquitin-protein hydrolase involved both in the processing of ubiquitin precursors and of ubiquitinated proteins. This enzyme is a thiol protease that recognizes and hydrolyzes a peptide bond at the C-terminal glycine of ubiquitin. Also binds to free monoubiquitin and may prevent its degradation in lysosomes. The homodimer may have ATP-independent ubiquitin ligase activity. The sequence is that of Ubiquitin carboxyl-terminal hydrolase isozyme L1 (UCHL1) from Monodelphis domestica (Gray short-tailed opossum).